The primary structure comprises 362 residues: Putative F-box/kelch-repeat protein At3g20710 (362 aa).

In terms of domain architecture, F-box spans 1 to 50 (MMMSNLPKDLVEEILSRVPFKYLRAIRSTCKNWYDLSKNRSFANKNIDKA). 2 Kelch repeats span residues 150-201 (YDKS…VSLN) and 293-341 (IYCR…YFKS).

This Arabidopsis thaliana (Mouse-ear cress) protein is Putative F-box/kelch-repeat protein At3g20710.